The following is an 85-amino-acid chain: Sec-independent protein translocase protein TatA (85 aa).

The helical transmembrane segment at 1-21 (MAGLQGWQLVIIILLAILLFA) threads the bilayer. Positions 43–85 (VKQMRTEGKDAKDERSGTGSTAADEPVEGRVVDRDETDPRDQR) are disordered. Basic and acidic residues-rich tracts occupy residues 44–58 (KQMRTEGKDAKDERS) and 69–85 (VEGRVVDRDETDPRDQR).

The protein belongs to the TatA/E family. In terms of assembly, the Tat system comprises two distinct complexes: a TatABC complex, containing multiple copies of TatA, TatB and TatC subunits, and a separate TatA complex, containing only TatA subunits. Substrates initially bind to the TatABC complex, which probably triggers association of the separate TatA complex to form the active translocon.

It is found in the cell membrane. Its function is as follows. Part of the twin-arginine translocation (Tat) system that transports large folded proteins containing a characteristic twin-arginine motif in their signal peptide across membranes. TatA could form the protein-conducting channel of the Tat system. The chain is Sec-independent protein translocase protein TatA from Micrococcus luteus (strain ATCC 4698 / DSM 20030 / JCM 1464 / CCM 169 / CCUG 5858 / IAM 1056 / NBRC 3333 / NCIMB 9278 / NCTC 2665 / VKM Ac-2230) (Micrococcus lysodeikticus).